The sequence spans 737 residues: MLIRRRALWLTIPILIIMTSHKIMCAFDLSHVHSESCLKIQDISSDTINFTPNLVMFRFFSNETHSDVFHLPKCIFDSKLTSYLFDHLNIYEDVSVYKNNFEKYYMGSVEGTYRTIIIKGEDTTPYLDKTTAPTVEITEKDLIITYQGIRYMNPFPVLSLIDDESCEVFDDINELILPYFGKCRKFYLNFGSVTLFGHITSNFVTIKYTAQNGTDPYTIRLFFGNSAEIVHTLPFEAQDLALRMMMYDDFEIIGEVGPVKEMLKSFKLSLLDSLLEQNHEDVMNDFRHVFEAFYNHIKKIRDGSIDIKSLHIEQLLDSLLAYSIGYYIQYRYPPYTGKWRGIEHFIETETYIHMVPELFDLFAHNMTVKTPTRPNAIKFINILIRLYSYTDYTKLDHRGLSLYFLKYIYQGNVTDDIATYAHRYMTNLYTKYTYPKTQEGEHLYKSYNDSLDTFILNTIGLKSKNKTLLHHILLLQTGMCNIQNMIGHFHSLQNNDPKFGALLSPCYRSLRYDLTAKKIGQLITKESLEPYGRLVNMVRFMTKNSSMLNVLKCELPEDDGLLAIATVDNKTYIISSRPIAVGVVYKATYTAINLFLYVTRIQNNTCIHIDKVYRDGDVKAVYTFSLDTAKDCGDMCPSVLVEYQTNTGFIGIHVINSIADIQYISENRKLFPESSHYLWLLKNDTVLELEGTNFFLFSSKSPGAIVLYIIIISLIVWTLYEIIKLFCYKRQWQYQKL.

The signal sequence occupies residues 1–25; the sequence is MLIRRRALWLTIPILIIMTSHKIMC. Topologically, residues 26-702 are virion surface; it reads AFDLSHVHSE…NFFLFSSKSP (677 aa). Residues asparagine 62, asparagine 212, asparagine 365, asparagine 412, asparagine 448, asparagine 465, asparagine 544, asparagine 569, asparagine 603, and asparagine 683 are each glycosylated (N-linked (GlcNAc...) asparagine; by host). The segment at 191-253 is interaction with gL; sequence GSVTLFGHIT…MMMYDDFEII (63 aa). A helical membrane pass occupies residues 703–723; it reads GAIVLYIIIISLIVWTLYEII. The Intravirion portion of the chain corresponds to 724 to 737; sequence KLFCYKRQWQYQKL.

It belongs to the herpesviridae glycoprotein H family. Interacts with glycoprotein L (gL); this interaction is necessary for the correct processing and cell surface expression of gH. The heterodimer gH/gL seems to interact with gB trimers during fusion. In terms of processing, N-glycosylated, O-glycosylated, and sialylated.

The protein localises to the virion membrane. Its subcellular location is the host cell membrane. It localises to the host endosome membrane. Its function is as follows. The heterodimer glycoprotein H-glycoprotein L is required for the fusion of viral and plasma membranes leading to virus entry into the host cell. Following initial binding to host receptor, membrane fusion is mediated by the fusion machinery composed of gB and the heterodimer gH/gL. May also be involved in the fusion between the virion envelope and the outer nuclear membrane during virion morphogenesis. The sequence is that of Envelope glycoprotein H from Elephantid herpesvirus 1 (isolate Asian elephant/Berlin/Kiba/1998) (EIHV-1).